The following is a 330-amino-acid chain: GRB2-related adapter protein 2 (330 aa).

Positions 1–56 (MEAVAKFDFTASGEDELSFHTGDVLKILSNQEEWFKAELGSQEGYVPKNFIDIQFP) constitute an SH3 1 domain. Residue Tyr45 is modified to Phosphotyrosine. The region spanning 58–149 (WFHEGLSRHQ…QKQIFLRDRT (92 aa)) is the SH2 domain. Lys106 carries the N6-acetyllysine modification. The interval 143–244 (IFLRDRTRED…GSLDINDGHC (102 aa)) is disordered. Residues 144-164 (FLRDRTREDQGHRGNSLDRRS) show a composition bias toward basic and acidic residues. The residue at position 187 (Ser187) is a Phosphoserine. Residues 209–222 (PAPQQLQQPPQQRY) are compositionally biased toward low complexity. The residue at position 236 (Ser236) is a Phosphoserine. Thr262 bears the Phosphothreonine mark. An SH3 2 domain is found at 271–330 (GRVRWARALYDFEALEDDELGFHSGEVVEVLDSSNPSWWTGRLHNKLGLFPANYVAPMTR).

The protein belongs to the GRB2/sem-5/DRK family. Interacts with phosphorylated LIME1 upon TCR activation. Interacts with phosphorylated LAT and LAX1 upon TCR activation. Interacts with SHB. Interacts with PTPN23.

The protein localises to the nucleus. It localises to the cytoplasm. The protein resides in the endosome. In terms of biological role, interacts with SLP-76 to regulate NF-AT activation. Binds to tyrosine-phosphorylated shc. This is GRB2-related adapter protein 2 (GRAP2) from Homo sapiens (Human).